Consider the following 388-residue polypeptide: Probable peptidoglycan glycosyltransferase FtsW (388 aa).

Helical transmembrane passes span Leu-16 to Val-36, Val-54 to Ser-74, Trp-82 to Gly-102, Leu-109 to Ala-129, Thr-144 to Pro-164, Gly-167 to Phe-187, Tyr-189 to Pro-209, Ser-233 to Val-253, Trp-277 to Val-297, Ala-310 to Val-330, and Leu-342 to Val-362.

Belongs to the SEDS family. FtsW subfamily.

The protein resides in the cell inner membrane. It carries out the reaction [GlcNAc-(1-&gt;4)-Mur2Ac(oyl-L-Ala-gamma-D-Glu-L-Lys-D-Ala-D-Ala)](n)-di-trans,octa-cis-undecaprenyl diphosphate + beta-D-GlcNAc-(1-&gt;4)-Mur2Ac(oyl-L-Ala-gamma-D-Glu-L-Lys-D-Ala-D-Ala)-di-trans,octa-cis-undecaprenyl diphosphate = [GlcNAc-(1-&gt;4)-Mur2Ac(oyl-L-Ala-gamma-D-Glu-L-Lys-D-Ala-D-Ala)](n+1)-di-trans,octa-cis-undecaprenyl diphosphate + di-trans,octa-cis-undecaprenyl diphosphate + H(+). Its pathway is cell wall biogenesis; peptidoglycan biosynthesis. Peptidoglycan polymerase that is essential for cell division. In Thiomicrospira cyclica (strain DSM 14477 / JCM 11371 / ALM1) (Thioalkalimicrobium cyclicum), this protein is Probable peptidoglycan glycosyltransferase FtsW.